We begin with the raw amino-acid sequence, 280 residues long: 4-deoxy-L-threo-5-hexosulose-uronate ketol-isomerase 1 (280 aa).

Residues His198, His200, Glu205, and His247 each coordinate Zn(2+).

This sequence belongs to the KduI family. Requires Zn(2+) as cofactor.

It catalyses the reaction 5-dehydro-4-deoxy-D-glucuronate = 3-deoxy-D-glycero-2,5-hexodiulosonate. It functions in the pathway glycan metabolism; pectin degradation; 2-dehydro-3-deoxy-D-gluconate from pectin: step 4/5. Functionally, catalyzes the isomerization of 5-dehydro-4-deoxy-D-glucuronate to 3-deoxy-D-glycero-2,5-hexodiulosonate. The sequence is that of 4-deoxy-L-threo-5-hexosulose-uronate ketol-isomerase 1 (kduI1) from Rhizobium meliloti (strain 1021) (Ensifer meliloti).